The chain runs to 355 residues: Protein MGF 360-10L (355 aa).

One copy of the ANK repeat lies at 57-89 (DLNTALMLATKENNYQLIKLFTEWGADINYGLI).

It belongs to the asfivirus MGF 360 family.

Plays a role in virus cell tropism, and may be required for efficient virus replication in macrophages. This is Protein MGF 360-10L from African swine fever virus (isolate Tick/Malawi/Lil 20-1/1983) (ASFV).